The chain runs to 172 residues: Scytalone dehydratase-like protein Arp1 (172 aa).

Position 49 (Y49) interacts with substrate. Catalysis depends on residues H84 and H109. N130 is a binding site for substrate.

Belongs to the scytalone dehydratase family. As to quaternary structure, homotrimer. Each subunit contains an active site, located in the central part of the hydrophobic core of the monomer, which functions independently.

Functionally, scytalone dehydratase-like protein; part of the Pks2 gene cluster that mediates the formation of infectious structures (appressoria), enabling these fungi to kill insects faster. The product of the Pks2 gene cluster is different from the one of Pks1 and has still not been identified. In Metarhizium guizhouense (strain ARSEF 977), this protein is Scytalone dehydratase-like protein Arp1.